The primary structure comprises 270 residues: tRNA pseudouridine synthase A (270 aa).

Asp-60 acts as the Nucleophile in catalysis. Tyr-118 lines the substrate pocket.

The protein belongs to the tRNA pseudouridine synthase TruA family. In terms of assembly, homodimer.

The catalysed reaction is uridine(38/39/40) in tRNA = pseudouridine(38/39/40) in tRNA. Its function is as follows. Formation of pseudouridine at positions 38, 39 and 40 in the anticodon stem and loop of transfer RNAs. The sequence is that of tRNA pseudouridine synthase A from Salmonella agona (strain SL483).